We begin with the raw amino-acid sequence, 718 residues long: Protein Smaug homolog 1 (718 aa).

A Phosphoserine modification is found at S168. Residues 278–310 (ARGPQCLPSDHAPLSPQSSVASSGSGGSEHLED) are disordered. Residues 323–396 (SGMKDVPAWL…LKSLERDIIE (74 aa)) enclose the SAM domain. Disordered regions lie at residues 417-474 (AYGS…LQPH) and 572-601 (NRGF…QYQI). The residue at position 420 (S420) is a Phosphoserine. T424 carries the post-translational modification Phosphothreonine. Positions 453–466 (GATATGATATPSAG) are enriched in low complexity. Position 573 is an omega-N-methylarginine (R573). Phosphoserine is present on S580.

It belongs to the SMAUG family.

The protein resides in the cytoplasm. It localises to the cell projection. Its subcellular location is the dendrite. The protein localises to the synapse. It is found in the synaptosome. Functionally, acts as a translational repressor of SRE-containing messengers. The protein is Protein Smaug homolog 1 (SAMD4A) of Macaca fascicularis (Crab-eating macaque).